The sequence spans 406 residues: RILP-like protein 1 (406 aa).

Position 7 is a phosphoserine (Ser7). Positions 10–97 (AALSALEKNV…RVERMDRIEK (88 aa)) constitute an RH1 domain. Cys47 carries the S-nitrosocysteine modification. A coiled-coil region spans residues 76–258 (ELDELRLELD…KLRERLQGEH (183 aa)). 2 disordered regions span residues 255–280 (QGEH…ESIS) and 330–354 (EIEE…QPES). Ser259 carries the post-translational modification Phosphoserine. Residues 262–280 (GEEEEAEIQPQPDGEESIS) are compositionally biased toward acidic residues. The RH2 domain occupies 294-359 (RPRFTLQELR…PQPESGIKRL (66 aa)).

This sequence belongs to the RILPL family. As to quaternary structure, interacts (when S-nitrosylated) with GAPDH. Interacts with RAB8A; interaction is dependent on the phosphorylation of 'Thr-72' of RAB8A. Interacts with RAB10 and RAB12; the interaction is dependent on the phosphorylation of 'Thr-73' of RAB10, and 'Ser-105' of RAB12. Post-translationally, S-nitrosylation is required for the interaction with GAPDH.

Its subcellular location is the cytoplasm. The protein localises to the cytosol. It localises to the cell projection. It is found in the cilium. The protein resides in the cytoskeleton. Its subcellular location is the microtubule organizing center. The protein localises to the centrosome. It localises to the centriole. In terms of biological role, neuroprotective protein, which acts by sequestring GAPDH in the cytosol and prevent the apoptotic function of GAPDH in the nucleus. Competes with SIAH1 for binding GAPDH. Does not regulate lysosomal morphology and distribution. Plays a role in the regulation of cell shape and polarity. Plays a role in cellular protein transport, including protein transport away from primary cilia. Binds to RAB10 following LRRK2-mediated RAB10 phosphorylation which leads to inhibition of ciliogenesis. The sequence is that of RILP-like protein 1 (Rilpl1) from Mus musculus (Mouse).